The chain runs to 426 residues: GATA type zinc finger protein asd-4 (426 aa).

Residues 16–40 (CQNCATSTTPLWRRDEMGQVLCNAC) form a GATA-type zinc finger. 2 disordered regions span residues 70-143 (RPDL…NPHI) and 159-178 (PGFG…MNGE). A compositionally biased stretch (low complexity) spans 104–113 (PNNPAAAARR). Residues 128-138 (SPVSRTGTPNV) show a composition bias toward polar residues. Residues 182-292 (QTHEQLLAAN…QDNGRHKKIR (111 aa)) are a coiled coil. Residues 306-318 (VEPQQPEQQQPAP) are compositionally biased toward low complexity. The disordered stretch occupies residues 306–426 (VEPQQPEQQQ…PVEEAPKAES (121 aa)). Positions 335 to 353 (APAPAPEAAPEQAPAPAPE) are enriched in pro residues. The span at 354–419 (PVQEQAQEPE…SEPPTTAPVE (66 aa)) shows a compositional bias: low complexity.

In terms of assembly, homotetramer.

It is found in the nucleus. Transcriptional regulator that functions in sexual development; disruption of asd-4 gene results in agenesis of ascus and ascospore with macroscopically normal fruiting body formation. The GATA-type zinc finger domain binds to DNA sequences from its own promoter region. The protein is GATA type zinc finger protein asd-4 (asd-4) of Neurospora crassa (strain ATCC 24698 / 74-OR23-1A / CBS 708.71 / DSM 1257 / FGSC 987).